Consider the following 247-residue polypeptide: Carboxy-S-adenosyl-L-methionine synthase (247 aa).

Residues Y39, 64–66 (GCS), 89–90 (DN), 117–118 (DI), N132, and R199 contribute to the S-adenosyl-L-methionine site.

It belongs to the class I-like SAM-binding methyltransferase superfamily. Cx-SAM synthase family. Homodimer.

It catalyses the reaction prephenate + S-adenosyl-L-methionine = carboxy-S-adenosyl-L-methionine + 3-phenylpyruvate + H2O. Its function is as follows. Catalyzes the conversion of S-adenosyl-L-methionine (SAM) to carboxy-S-adenosyl-L-methionine (Cx-SAM). The protein is Carboxy-S-adenosyl-L-methionine synthase of Salmonella agona (strain SL483).